The chain runs to 433 residues: 26S proteasome regulatory subunit 7 (433 aa).

A disordered region spans residues 1 to 23 (MPDYLGADQRKTKEEEKEDKPIR). Positions 8-23 (DQRKTKEEEKEDKPIR) are enriched in basic and acidic residues. 216 to 223 (GPPGTGKT) provides a ligand contact to ATP.

This sequence belongs to the AAA ATPase family. Phosphorylated. Dephosphorylated by ublcp1 which impairs psmc2 ATPase activity and disrupts 26S proteasome assembly.

It is found in the cytoplasm. It localises to the nucleus. The 26S proteasome is involved in the ATP-dependent degradation of ubiquitinated proteins. The regulatory (or ATPase) complex confers ATP dependency and substrate specificity to the 26S complex. The sequence is that of 26S proteasome regulatory subunit 7 (psmc2) from Xenopus laevis (African clawed frog).